Reading from the N-terminus, the 500-residue chain is Proline--tRNA ligase (500 aa).

This sequence belongs to the class-II aminoacyl-tRNA synthetase family. ProS type 3 subfamily. Homodimer.

It localises to the cytoplasm. It carries out the reaction tRNA(Pro) + L-proline + ATP = L-prolyl-tRNA(Pro) + AMP + diphosphate. In terms of biological role, catalyzes the attachment of proline to tRNA(Pro) in a two-step reaction: proline is first activated by ATP to form Pro-AMP and then transferred to the acceptor end of tRNA(Pro). In Paramagnetospirillum magneticum (strain ATCC 700264 / AMB-1) (Magnetospirillum magneticum), this protein is Proline--tRNA ligase.